The primary structure comprises 250 residues: Acetylglutamate kinase (250 aa).

Residues Gly41 to Gly42, Arg63, and Asn156 contribute to the substrate site.

This sequence belongs to the acetylglutamate kinase family. ArgB subfamily.

Its subcellular location is the cytoplasm. The catalysed reaction is N-acetyl-L-glutamate + ATP = N-acetyl-L-glutamyl 5-phosphate + ADP. Its pathway is amino-acid biosynthesis; L-arginine biosynthesis; N(2)-acetyl-L-ornithine from L-glutamate: step 2/4. Functionally, catalyzes the ATP-dependent phosphorylation of N-acetyl-L-glutamate. The protein is Acetylglutamate kinase of Listeria monocytogenes serotype 4a (strain HCC23).